The chain runs to 215 residues: Ribonuclease T (215 aa).

Residues 20 to 194 (VVIDVETAGF…YDTERTAVLF (175 aa)) form the Exonuclease domain. Mg(2+) contacts are provided by Asp23, Glu25, His181, and Asp186. His181 acts as the Proton donor/acceptor in catalysis.

The protein belongs to the RNase T family. Homodimer. Mg(2+) serves as cofactor.

In terms of biological role, trims short 3' overhangs of a variety of RNA species, leaving a one or two nucleotide 3' overhang. Responsible for the end-turnover of tRNA: specifically removes the terminal AMP residue from uncharged tRNA (tRNA-C-C-A). Also appears to be involved in tRNA biosynthesis. The protein is Ribonuclease T of Salmonella paratyphi A (strain ATCC 9150 / SARB42).